Consider the following 170-residue polypeptide: Acetyl-CoA decarbonylase/synthase complex subunit epsilon 2 (170 aa).

The protein belongs to the CdhB family. In terms of assembly, heterotetramer of two alpha and two epsilon subunits. The ACDS complex is made up of alpha, epsilon, beta, gamma and delta subunits with a probable stoichiometry of (alpha(2)epsilon(2))(4)-beta(8)-(gamma(1)delta(1))(8).

It functions in the pathway one-carbon metabolism; methanogenesis from acetate. Its function is as follows. Part of a complex that catalyzes the reversible cleavage of acetyl-CoA, allowing growth on acetate as sole source of carbon and energy. The alpha-epsilon subcomponent functions as a carbon monoxide dehydrogenase. The precise role of the epsilon subunit is unclear; it may have a stabilizing role within the alpha(2)epsilon(2) component and/or be involved in electron transfer to FAD during a potential FAD-mediated CO oxidation. The sequence is that of Acetyl-CoA decarbonylase/synthase complex subunit epsilon 2 (cdhB2) from Methanosarcina mazei (strain ATCC BAA-159 / DSM 3647 / Goe1 / Go1 / JCM 11833 / OCM 88) (Methanosarcina frisia).